The chain runs to 406 residues: Tryptophan synthase beta chain (406 aa).

Lys-99 carries the post-translational modification N6-(pyridoxal phosphate)lysine.

Belongs to the TrpB family. As to quaternary structure, tetramer of two alpha and two beta chains. Pyridoxal 5'-phosphate is required as a cofactor.

It carries out the reaction (1S,2R)-1-C-(indol-3-yl)glycerol 3-phosphate + L-serine = D-glyceraldehyde 3-phosphate + L-tryptophan + H2O. The protein operates within amino-acid biosynthesis; L-tryptophan biosynthesis; L-tryptophan from chorismate: step 5/5. Functionally, the beta subunit is responsible for the synthesis of L-tryptophan from indole and L-serine. The polypeptide is Tryptophan synthase beta chain (Phenylobacterium zucineum (strain HLK1)).